A 635-amino-acid polypeptide reads, in one-letter code: MISSVCVSSYRGRKSGNKPPSKTCLKEEMAKGEASEKIIINVGGTRHETYRSTLRTLPGTRLAWLADPDGGGRPETDGGGVGSSGSSGGGGCEFFFDRHPGVFAYVLNYYRTGKLHCPADVCGPLFEEELTFWGIDETDVEPCCWMTYRQHRDAEEALDIFESPDGGGSGAGPSDEAGDDERELALQRLGPHEGGAGHGAGSGGCRGWQPRMWALFEDPYSSRAARVVAFASLFFILVSITTFCLETHEAFNIDRNVTEILRVGNITSVHFRREVETEPILTYIEGVCVLWFTLEFLVRIVCCPDTLDFVKNLLNIIDFVAILPFYLEVGLSGLSSKAARDVLGFLRVVRFVRILRIFKLTRHFVGLRVLGHTLRASTNEFLLLIIFLALGVLIFATMIYYAERIGARPSDPRGNDHTDFKNIPIGFWWAVVTMTTLGYGDMYPKTWSGMLVGALCALAGVLTIAMPVPVIVNNFGMYYSLAMAKQKLPKKRKKHVPRPAQLESPMYCKSEETSPRDSTCSDTSPPAREEGMIERKRADSKQNGDANAVLSDEEGAGLTQPLASSPTPEERRALRRSTTRDRNKKAAACFLLSTGDYACADGSVRKGTFVLRDLPLQHSPEAACPPTAGTLFLPH.

Positions 1 to 24 are disordered; sequence MISSVCVSSYRGRKSGNKPPSKTC. The inactivation gate stretch occupies residues 1–28; the sequence is MISSVCVSSYRGRKSGNKPPSKTCLKEE. Residues 1–226 lie on the Cytoplasmic side of the membrane; the sequence is MISSVCVSSY…EDPYSSRAAR (226 aa). Serine 8, serine 9, serine 15, and serine 21 each carry phosphoserine. Zn(2+) contacts are provided by histidine 116, cysteine 122, cysteine 143, and cysteine 144. The segment at 160 to 180 is disordered; the sequence is IFESPDGGGSGAGPSDEAGDD. Residues 227-247 form a helical membrane-spanning segment; the sequence is VVAFASLFFILVSITTFCLET. Residues asparagine 256 and asparagine 265 are each glycosylated (N-linked (GlcNAc...) asparagine). The helical transmembrane segment at 278–298 threads the bilayer; it reads EPILTYIEGVCVLWFTLEFLV. Over 299-312 the chain is Cytoplasmic; sequence RIVCCPDTLDFVKN. The helical transmembrane segment at 313–333 threads the bilayer; that stretch reads LLNIIDFVAILPFYLEVGLSG. Residues 345-364 traverse the membrane as a helical; Voltage-sensor segment; that stretch reads FLRVVRFVRILRIFKLTRHF. Topologically, residues 365–380 are cytoplasmic; it reads VGLRVLGHTLRASTNE. Residues 381–401 form a helical membrane-spanning segment; the sequence is FLLLIIFLALGVLIFATMIYY. K(+)-binding residues include threonine 436, leucine 437, glycine 438, and tyrosine 439. Positions 436–441 match the Selectivity filter motif; sequence TLGYGD. Residues 452–472 form a helical membrane-spanning segment; that stretch reads VGALCALAGVLTIAMPVPVIV. Residues 473 to 635 lie on the Cytoplasmic side of the membrane; that stretch reads NNFGMYYSLA…PTAGTLFLPH (163 aa). Positions 490–580 are disordered; it reads KKRKKHVPRP…RRALRRSTTR (91 aa). A compositionally biased stretch (basic and acidic residues) spans 527–542; that stretch reads AREEGMIERKRADSKQ.

Belongs to the potassium channel family. C (Shaw) (TC 1.A.1.2) subfamily. Kv3.4/KCNC4 sub-subfamily. As to quaternary structure, homotetramer. Heterotetramer of potassium channel proteins. Phosphorylation of serine residues in the inactivation gate inhibits rapid channel closure.

It is found in the membrane. It catalyses the reaction K(+)(in) = K(+)(out). Functionally, voltage-gated potassium channel that opens in response to the voltage difference across the membrane, forming a potassium-selective channel through which potassium ions pass in accordance with their electrochemical gradient. The channel displays rapid activation and inactivation kinetics. The sequence is that of Voltage-gated potassium channel KCNC4 from Homo sapiens (Human).